The sequence spans 447 residues: Na(+)-translocating NADH-quinone reductase subunit A (447 aa).

The protein belongs to the NqrA family. As to quaternary structure, composed of six subunits; NqrA, NqrB, NqrC, NqrD, NqrE and NqrF.

It catalyses the reaction a ubiquinone + n Na(+)(in) + NADH + H(+) = a ubiquinol + n Na(+)(out) + NAD(+). NQR complex catalyzes the reduction of ubiquinone-1 to ubiquinol by two successive reactions, coupled with the transport of Na(+) ions from the cytoplasm to the periplasm. NqrA to NqrE are probably involved in the second step, the conversion of ubisemiquinone to ubiquinol. The sequence is that of Na(+)-translocating NADH-quinone reductase subunit A from Haemophilus influenzae (strain PittEE).